A 100-amino-acid polypeptide reads, in one-letter code: Small ribosomal subunit protein uS14 (100 aa).

This sequence belongs to the universal ribosomal protein uS14 family. Part of the 30S ribosomal subunit. Contacts proteins S3 and S10.

Its function is as follows. Binds 16S rRNA, required for the assembly of 30S particles and may also be responsible for determining the conformation of the 16S rRNA at the A site. This Prochlorococcus marinus (strain NATL2A) protein is Small ribosomal subunit protein uS14.